Reading from the N-terminus, the 547-residue chain is Signal recognition particle receptor subunit alpha homolog (547 aa).

The interval 124–174 is disordered; the sequence is LENETDTKSLPVEANNDNSARKKNEYEMKKKGAQSKQTNAPKKGKKQLRKW. Residues 142–153 show a composition bias toward basic and acidic residues; the sequence is SARKKNEYEMKK. Residues 343-546 are NG domain; the sequence is YTISLIGVNG…SVDWVVDQLM (204 aa). Residues 349 to 356, 437 to 441, and 498 to 501 contribute to the GTP site; these read GVNGVGKS, DTAGR, and SKVD.

It belongs to the GTP-binding SRP family. As to quaternary structure, heterodimer of an alpha and a beta chain.

Its subcellular location is the endoplasmic reticulum membrane. In terms of biological role, component of the SRP (signal recognition particle) receptor (SR). Ensures, in conjunction with the signal recognition particle, the correct targeting of the nascent secretory proteins to the endoplasmic reticulum membrane system. GTP hydrolysis may enhance the fidelity of and provide unidirectionality to the targeting reaction. This Schizosaccharomyces pombe (strain 972 / ATCC 24843) (Fission yeast) protein is Signal recognition particle receptor subunit alpha homolog (srp101).